Consider the following 434-residue polypeptide: Trigger factor (434 aa).

Residues 161–246 (GKRVSIDFVG…VNKVEARELP (86 aa)) form the PPIase FKBP-type domain.

This sequence belongs to the FKBP-type PPIase family. Tig subfamily.

The protein localises to the cytoplasm. It carries out the reaction [protein]-peptidylproline (omega=180) = [protein]-peptidylproline (omega=0). Its function is as follows. Involved in protein export. Acts as a chaperone by maintaining the newly synthesized protein in an open conformation. Functions as a peptidyl-prolyl cis-trans isomerase. The polypeptide is Trigger factor (Vibrio parahaemolyticus serotype O3:K6 (strain RIMD 2210633)).